The primary structure comprises 789 residues: LPS-assembly protein LptD (789 aa).

A signal peptide spans 1-39; the sequence is MPPRQLSQTTPSCAVVPRKRRLVAALIAVPGLMPALAHA.

This sequence belongs to the LptD family. Component of the lipopolysaccharide transport and assembly complex. Interacts with LptE and LptA.

It is found in the cell outer membrane. Its function is as follows. Together with LptE, is involved in the assembly of lipopolysaccharide (LPS) at the surface of the outer membrane. The polypeptide is LPS-assembly protein LptD (Paraburkholderia xenovorans (strain LB400)).